We begin with the raw amino-acid sequence, 580 residues long: Viral transcription factor IE2 (580 aa).

The segment covering 1-11 has biased composition (basic and acidic residues); the sequence is MESSAKRKMDP. Disordered stretches follow at residues 1-30 and 99-161; these read MESS…TPVT and DSSS…VIIK. Polar residues predominate over residues 99–133; the sequence is DSSSTGPTLTTHSCSVSSAPLNKPTPTSVAVTNTP. Glycyl lysine isopeptide (Lys-Gly) (interchain with G-Cter in SUMO) cross-links involve residues lysine 175 and lysine 180. Residues 199–202 carry the SUMO-interacting motif 1/SIM1 motif; the sequence is CIVI. Residues 200-208 are non-covalent SUMO1 binding region (SIM); it reads IVISDSEEE. Phosphoserine occurs at positions 203 and 205. Residues 206–336 are disordered; that stretch reads EEEQGEEVET…SKRISELDNE (131 aa). Composition is skewed to low complexity over residues 216 to 236, 259 to 271, and 302 to 317; these read RGAT…TSPT, SSSS…SASD, and AASS…SSGG. The SUMO-interacting motif 1/SIM2 signature appears at 410–413; that stretch reads IQII. Residues 501–504 carry the SUMO-interacting motif 1/SIM3 motif; the sequence is VDLL.

Belongs to the HHV-5 IE2 protein family. As to quaternary structure, interacts with host SUMO-modified form of TATA-binding protein (TBP)-associated factor 12/TAF12 in a SIM-dependent manner; this interaction increases the transactivation activity of IE2. Interacts with host CHAF1A. Interacts with several components of the host transcriptional machinery including TBP, TF2B and CREB1. Interacts with host DNA replication licensing factor MCM3. Interacts with host PLSCR1; this interaction inhibits IE2 transactivating activity. Post-translationally, phosphorylated by host CK2 at Ser-203 and Ser-205; leading to enhanced SUMOylation. In terms of processing, SUMOylated; SUMOylation is enhanced when IE2 is phosphorylated by host CK2. The sumoylation is necessary for efficient replication of the virus and thus for the function of this viral transcription factor.

The protein localises to the host nucleus. Stimulates viral early and late gene expression and thus play a crucial role in the regulation of productive infection. Selectively drives host RNA Pol II transcription initiation at a subset of viral early-late and late promoters without substantially affecting Pol II transcription of expressed host genes. Mechanistically, forms a repressive complex at the major immediate-early promoter region involving direct association with host nucleosomes and TBP. Concerning activation, stimulates transcription by binding nearby, but not within, core promoter regions. In addition, activates quiescent cells to reenter the cell cycle and up-regulates several E2F-responsive genes, which are responsible for pushing the cell into S phase. In S-phase, inhibits cellular DNA synthesis and blocks further cell cycle progression. In Homo sapiens (Human), this protein is Viral transcription factor IE2 (UL122).